A 449-amino-acid chain; its full sequence is Omega-amino acid--pyruvate aminotransferase (449 aa).

Substrate is bound at residue tryptophan 60. Glycine 119 to serine 120 serves as a coordination point for pyridoxal 5'-phosphate. Residue lysine 288 is modified to N6-(pyridoxal phosphate)lysine. Pyridoxal 5'-phosphate is bound at residue threonine 327. 2 residues coordinate substrate: arginine 414 and glutamine 421.

The protein belongs to the class-III pyridoxal-phosphate-dependent aminotransferase family. In terms of assembly, homotetramer. The cofactor is pyridoxal 5'-phosphate.

The catalysed reaction is 3-oxopropanoate + L-alanine = beta-alanine + pyruvate. In terms of biological role, catalyzes transamination between a variety of omega-amino acids, mono and diamines, and pyruvate. Plays a pivotal role in the metabolism of the omega amino acids. In Pseudomonas putida (Arthrobacter siderocapsulatus), this protein is Omega-amino acid--pyruvate aminotransferase.